Here is a 310-residue protein sequence, read N- to C-terminus: Nucleotide-binding protein MAP_1147 (310 aa).

Residue 30 to 37 (GLSGAGRG) participates in ATP binding. 81–84 (DVRS) contacts GTP.

It belongs to the RapZ-like family.

Its function is as follows. Displays ATPase and GTPase activities. This chain is Nucleotide-binding protein MAP_1147, found in Mycolicibacterium paratuberculosis (strain ATCC BAA-968 / K-10) (Mycobacterium paratuberculosis).